The chain runs to 750 residues: Photosystem I P700 chlorophyll a apoprotein A1 (750 aa).

8 helical membrane passes run 70–93, 156–179, 195–219, 291–309, 346–369, 385–411, 433–455, and 531–549; these read VFSA…FHGA, LYCT…FHYH, LNHH…HVSL, IAHH…GHMY, WHAQ…HHMY, LSLF…IFMV, AIIS…LYIH, and FLVH…LILL. Positions 573 and 582 each coordinate [4Fe-4S] cluster. The next 2 membrane-spanning stretches (helical) occupy residues 589-610 and 664-686; these read HVFL…HFSW and LSAY…MFLF. Position 675 (histidine 675) interacts with chlorophyll a'. Chlorophyll a-binding residues include methionine 683 and tyrosine 691. Residue tryptophan 692 coordinates phylloquinone. The chain crosses the membrane as a helical span at residues 724–744; that stretch reads AVGVTHYLLGGIATTWAFFLA.

The protein belongs to the PsaA/PsaB family. In terms of assembly, the PsaA/B heterodimer binds the P700 chlorophyll special pair and subsequent electron acceptors. PSI consists of a core antenna complex that captures photons, and an electron transfer chain that converts photonic excitation into a charge separation. The eukaryotic PSI reaction center is composed of at least 11 subunits. Requires P700 is a chlorophyll a/chlorophyll a' dimer, A0 is one or more chlorophyll a, A1 is one or both phylloquinones and FX is a shared 4Fe-4S iron-sulfur center. as cofactor.

It is found in the plastid. The protein resides in the chloroplast thylakoid membrane. It catalyses the reaction reduced [plastocyanin] + hnu + oxidized [2Fe-2S]-[ferredoxin] = oxidized [plastocyanin] + reduced [2Fe-2S]-[ferredoxin]. In terms of biological role, psaA and PsaB bind P700, the primary electron donor of photosystem I (PSI), as well as the electron acceptors A0, A1 and FX. PSI is a plastocyanin-ferredoxin oxidoreductase, converting photonic excitation into a charge separation, which transfers an electron from the donor P700 chlorophyll pair to the spectroscopically characterized acceptors A0, A1, FX, FA and FB in turn. Oxidized P700 is reduced on the lumenal side of the thylakoid membrane by plastocyanin. The chain is Photosystem I P700 chlorophyll a apoprotein A1 from Draba nemorosa (Woodland whitlowgrass).